The following is a 326-amino-acid chain: Putative GTPase CC_2483 (326 aa).

Residues 61–69 (GVPGAGKST), Asp-203, and 238–240 (SGL) each bind GTP.

Belongs to the SIMIBI class G3E GTPase family. ArgK/MeaB subfamily.

Functionally, may have GTPase activity. May also bind and hydrolyze ATP. May function as chaperone. This is Putative GTPase CC_2483 from Caulobacter vibrioides (strain ATCC 19089 / CIP 103742 / CB 15) (Caulobacter crescentus).